We begin with the raw amino-acid sequence, 1192 residues long: DNA topoisomerase 2 (1192 aa).

Residues Asn-64, Asn-95, and 142–149 contribute to the ATP site; that span reads GTNGVGLK. 3 residues coordinate Mg(2+): Glu-438, Asp-539, and Asp-541. Residues 707–1174 enclose the Topo IIA-type catalytic domain; the sequence is IPNFLDGMTR…PGASVWLEEI (468 aa). Tyr-800 (O-(5'-phospho-DNA)-tyrosine intermediate) is an active-site residue.

Belongs to the type II topoisomerase family. Requires Mg(2+) as cofactor. It depends on Mn(2+) as a cofactor. The cofactor is Ca(2+).

Its subcellular location is the host cytoplasm. It catalyses the reaction ATP-dependent breakage, passage and rejoining of double-stranded DNA.. Its function is as follows. Type II topoisomerase. Processively relaxes supercoiled DNA. Displays DNA-supercoiling activity only when associated with the viral histone-like protein. This is DNA topoisomerase 2 from Ornithodoros (relapsing fever ticks).